The following is a 639-amino-acid chain: mRNA export factor (639 aa).

3 disordered regions span residues 1 to 45 (MQAE…SLES), 63 to 287 (LLGD…KWGA), and 322 to 355 (CTAR…SQPR). A compositionally biased stretch (basic residues) spans 142-152 (PRRRTHARSRS). Over residues 153 to 169 (PRAGSTSSQQPPSSSGG) the composition is skewed to low complexity. The span at 175-189 (VRREAGDRETSEKPA) shows a compositional bias: basic and acidic residues. The span at 203–215 (HQCQSPPAQTASQ) shows a compositional bias: polar residues. Composition is skewed to basic and acidic residues over residues 234-247 (RTPH…HEGA) and 326-348 (DPAR…ERRT). Residues Cys525, His606, Cys610, and Cys615 each coordinate Zn(2+). A CHC2-type zinc finger spans residues 525 to 615 (CHLAASKSPL…HANVCRKEEC (91 aa)).

Belongs to the HHV-1 ICP27 protein family.

The protein localises to the host cytoplasm. The protein resides in the host nucleus. Its function is as follows. Multifunctional regulator of the expression of viral genes that mediates nuclear export of viral intronless mRNAs. This immediate early (EI) protein promotes the nuclear export of viral intronless mRNAs. The polypeptide is mRNA export factor (Amazona oratrix (yellow-headed parrot)).